An 854-amino-acid chain; its full sequence is uncharacterized protein (854 aa).

The protein belongs to the PEP-utilizing enzyme family.

This is an uncharacterized protein from Mycobacterium tuberculosis (strain CDC 1551 / Oshkosh).